We begin with the raw amino-acid sequence, 211 residues long: Stromal cell-derived factor 2 (211 aa).

Residues 1 to 18 form the signal peptide; sequence MAVVSLLLFGGLWSAVGS. 3 consecutive MIR domains span residues 21 to 75, 83 to 138, and 139 to 193; these read LAVV…IRGK, GTPI…VLCN, and GPYW…AMEG.

The protein resides in the secreted. The protein is Stromal cell-derived factor 2 (SDF2) of Bos taurus (Bovine).